The primary structure comprises 281 residues: NADH-quinone oxidoreductase subunit B (281 aa).

[4Fe-4S] cluster-binding residues include C37, C38, C103, and C132. A disordered region spans residues 242–281 (DAKPLDESRAHGPGPTTADIADAADTADSDAAPGATHDTP). Residues 257 to 281 (TTADIADAADTADSDAAPGATHDTP) show a composition bias toward low complexity.

The protein belongs to the complex I 20 kDa subunit family. NDH-1 is composed of 14 different subunits. Subunits NuoB, C, D, E, F, and G constitute the peripheral sector of the complex. [4Fe-4S] cluster serves as cofactor.

The protein localises to the cell membrane. It catalyses the reaction a quinone + NADH + 5 H(+)(in) = a quinol + NAD(+) + 4 H(+)(out). Functionally, NDH-1 shuttles electrons from NADH, via FMN and iron-sulfur (Fe-S) centers, to quinones in the respiratory chain. The immediate electron acceptor for the enzyme in this species is believed to be a menaquinone. Couples the redox reaction to proton translocation (for every two electrons transferred, four hydrogen ions are translocated across the cytoplasmic membrane), and thus conserves the redox energy in a proton gradient. This is NADH-quinone oxidoreductase subunit B from Frankia alni (strain DSM 45986 / CECT 9034 / ACN14a).